The sequence spans 115 residues: Cytochrome c (115 aa).

Heme c-binding residues include Cys26, Cys29, His30, and Met91.

The protein belongs to the cytochrome c family. In terms of processing, binds 1 heme c group covalently per subunit.

Its subcellular location is the mitochondrion intermembrane space. Functionally, electron carrier protein. The oxidized form of the cytochrome c heme group can accept an electron from the heme group of the cytochrome c1 subunit of cytochrome reductase. Cytochrome c then transfers this electron to the cytochrome oxidase complex, the final protein carrier in the mitochondrial electron-transport chain. In Theileria annulata, this protein is Cytochrome c.